A 431-amino-acid chain; its full sequence is Histidinol dehydrogenase (431 aa).

NAD(+) is bound by residues Y127, Q189, and N212. Residues S237, Q259, and H262 each contribute to the substrate site. Q259 and H262 together coordinate Zn(2+). Catalysis depends on proton acceptor residues E326 and H327. Residues H327, D360, E414, and H419 each contribute to the substrate site. D360 provides a ligand contact to Zn(2+). H419 provides a ligand contact to Zn(2+).

Belongs to the histidinol dehydrogenase family. Zn(2+) serves as cofactor.

The enzyme catalyses L-histidinol + 2 NAD(+) + H2O = L-histidine + 2 NADH + 3 H(+). Its pathway is amino-acid biosynthesis; L-histidine biosynthesis; L-histidine from 5-phospho-alpha-D-ribose 1-diphosphate: step 9/9. Catalyzes the sequential NAD-dependent oxidations of L-histidinol to L-histidinaldehyde and then to L-histidine. The chain is Histidinol dehydrogenase from Xanthomonas axonopodis pv. citri (strain 306).